A 624-amino-acid polypeptide reads, in one-letter code: Phosphatidylserine decarboxylase proenzyme 2 (624 aa).

The disordered stretch occupies residues 1-30 (MGHSPSRHNACGGGGGDGESPPSPLPSRFE). Residues 16-129 (GDGESPPSPL…KDLDEHSEVL (114 aa)) form the C2 domain. EF-hand domains are found at residues 156–191 (TEQSFARRVLAIVDYNEDGELSLSEFSDLMKAFGNK) and 192–227 (LAVAKIEELFRQADKNGDGIVDMDELAALLANQQEK). Positions 169, 171, 173, 175, 180, 205, 207, 209, and 216 each coordinate Ca(2+). Active-site charge relay system; for autoendoproteolytic cleavage activity residues include Asp425, His481, and Ser569. Ser569 functions as the Schiff-base intermediate with substrate; via pyruvic acid; for decarboxylase activity in the catalytic mechanism. Ser569 bears the Pyruvic acid (Ser); by autocatalysis mark.

The protein belongs to the phosphatidylserine decarboxylase family. PSD-B subfamily. Eukaryotic type II sub-subfamily. As to quaternary structure, heterodimer of a large membrane-associated beta subunit and a small pyruvoyl-containing alpha subunit. Pyruvate is required as a cofactor. In terms of processing, is synthesized initially as an inactive proenzyme. Formation of the active enzyme involves a self-maturation process in which the active site pyruvoyl group is generated from an internal serine residue via an autocatalytic post-translational modification. Two non-identical subunits are generated from the proenzyme in this reaction, and the pyruvate is formed at the N-terminus of the alpha chain, which is derived from the carboxyl end of the proenzyme. The autoendoproteolytic cleavage occurs by a canonical serine protease mechanism, in which the side chain hydroxyl group of the serine supplies its oxygen atom to form the C-terminus of the beta chain, while the remainder of the serine residue undergoes an oxidative deamination to produce ammonia and the pyruvoyl prosthetic group on the alpha chain. During this reaction, the Ser that is part of the protease active site of the proenzyme becomes the pyruvoyl prosthetic group, which constitutes an essential element of the active site of the mature decarboxylase.

Its subcellular location is the vacuole membrane. The protein localises to the endoplasmic reticulum membrane. It carries out the reaction a 1,2-diacyl-sn-glycero-3-phospho-L-serine + H(+) = a 1,2-diacyl-sn-glycero-3-phosphoethanolamine + CO2. The protein operates within phospholipid metabolism; phosphatidylethanolamine biosynthesis; phosphatidylethanolamine from CDP-diacylglycerol: step 2/2. Functionally, catalyzes the formation of phosphatidylethanolamine (PtdEtn) from phosphatidylserine (PtdSer). Plays a central role in phospholipid metabolism and in the interorganelle trafficking of phosphatidylserine. This Oryza sativa subsp. japonica (Rice) protein is Phosphatidylserine decarboxylase proenzyme 2.